Consider the following 250-residue polypeptide: Cholesterol ring-cleaving hydrolase IpdB subunit (250 aa).

This sequence belongs to the 3-oxoacid CoA-transferase subunit B family. In terms of assembly, heterotetramer composed of 2 IpdA subunits and 2 IpdB subunits.

It carries out the reaction (3E)-2-(2-carboxylatoethyl)-3-methyl-6-oxocyclohex-1-ene-1-carboxyl-CoA + H2O = 6-methyl-3,7-dioxodecanedioyl-CoA. The protein operates within steroid metabolism; cholesterol degradation. Functionally, involved in the final steps of cholesterol and steroid degradation. Opens the last steroid ring of cholesterol by catalyzing the hydrolysis of (3E)-2-(2-carboxylatoethyl)-3-methyl-6-oxocyclohex-1-ene-1-carboxyl-CoA (COCHEA-CoA) to 6-methyl-3,7-dioxodecanedioyl-CoA (MeDODA-CoA). This is Cholesterol ring-cleaving hydrolase IpdB subunit from Mycobacterium bovis (strain ATCC BAA-935 / AF2122/97).